Reading from the N-terminus, the 282-residue chain is DegV domain-containing protein M6_Spy0690 (282 aa).

One can recognise a DegV domain in the interval 3-280 (LAVITDSTAT…EGAIAFGVTP (278 aa)). The hexadecanoate site is built by Thr61 and Ser94.

May bind long-chain fatty acids, such as palmitate, and may play a role in lipid transport or fatty acid metabolism. The sequence is that of DegV domain-containing protein M6_Spy0690 from Streptococcus pyogenes serotype M6 (strain ATCC BAA-946 / MGAS10394).